The primary structure comprises 234 residues: MKVLANFEDNHKIPTNSGIDNLLDGGVEKGTVTQIFGPPGSGKSNISLVLAVNVAKQGKKVVYVDTEGGISINRIKQIAGEDFPKIVNNIIVFEPTSFLEQNENLKTIELWIRKHHDDVDLCVLDSAVALYRVDDMKSSRLNKELGKQMGILAKIARNYDVAVVLTNQIYSSFDDDNKDVVKAVGGTILQYWSKTIIQLERNDEFNKRVATLKRHRSIGEGKQATFKIVERGII.

Belongs to the eukaryotic RecA-like protein family. RadB subfamily.

Its function is as follows. Involved in DNA repair and in homologous recombination. May regulate the cleavage reactions of the branch-structured DNA. Has a very weak ATPase activity that is not stimulated by DNA. Binds DNA but does not promote DNA strands exchange. The sequence is that of DNA repair and recombination protein RadB from Methanobrevibacter smithii (strain ATCC 35061 / DSM 861 / OCM 144 / PS).